Here is a 74-residue protein sequence, read N- to C-terminus: Hadrucalcin (74 aa).

The signal sequence occupies residues 1–27 (MKTSSLTIIFIAVIITIICLNIHDIEA). Residues 28–39 (REIEFNAGRVVR) constitute a propeptide that is removed on maturation. 3 cysteine pairs are disulfide-bonded: C44-C58, C51-C62, and C57-C73. The essential for stimulation of [3H]ryanodine binding to RYR1 stretch occupies residues 64–65 (RR).

Expressed by the venom gland.

Its subcellular location is the secreted. Its function is as follows. This toxin activates ryanodine receptors RyR1 and RyR2 by inducing a long-lasting subconductance state (35% of the full conductance stateon RyR1). Furthermore, it triggers calcium release from sarcoplasmic vesicles (11.8 nM are enough to induce a sharp release on RyR1, and 55% of the total calcium is released after toxin (100 nM) addition on RyR1) probably by acting as a cell-penetrating peptide (CPP). In addition, it has been shown to dose-dependently stimulate ryanodine binding to RyR1 (EC(50)=14.8 nM). It also augments the bell-shaped calcium-[3H]ryanodine binding curve that is maximal at about 10 uM calcium concentration. It binds a different site as ryanodine. It acts synergistically with caffeine. In vivo, intracerebroventricular injection into mice induces neurotoxic symptoms, followed by death. This Hoffmannihadrurus gertschi (Scorpion) protein is Hadrucalcin.